We begin with the raw amino-acid sequence, 264 residues long: Thymidylate synthase (264 aa).

Arginine 21 lines the dUMP pocket. Histidine 51 contacts (6R)-5,10-methylene-5,6,7,8-tetrahydrofolate. A dUMP-binding site is contributed by 126-127 (RR). Cysteine 146 serves as the catalytic Nucleophile. DUMP-binding positions include 166–169 (RSCD), asparagine 177, and 207–209 (HLY). A (6R)-5,10-methylene-5,6,7,8-tetrahydrofolate-binding site is contributed by aspartate 169. Residue alanine 263 participates in (6R)-5,10-methylene-5,6,7,8-tetrahydrofolate binding.

Belongs to the thymidylate synthase family. Bacterial-type ThyA subfamily. In terms of assembly, homodimer.

The protein localises to the cytoplasm. The catalysed reaction is dUMP + (6R)-5,10-methylene-5,6,7,8-tetrahydrofolate = 7,8-dihydrofolate + dTMP. Its pathway is pyrimidine metabolism; dTTP biosynthesis. Functionally, catalyzes the reductive methylation of 2'-deoxyuridine-5'-monophosphate (dUMP) to 2'-deoxythymidine-5'-monophosphate (dTMP) while utilizing 5,10-methylenetetrahydrofolate (mTHF) as the methyl donor and reductant in the reaction, yielding dihydrofolate (DHF) as a by-product. This enzymatic reaction provides an intracellular de novo source of dTMP, an essential precursor for DNA biosynthesis. This chain is Thymidylate synthase, found in Yersinia pestis bv. Antiqua (strain Antiqua).